Consider the following 311-residue polypeptide: Lipoyl synthase (311 aa).

[4Fe-4S] cluster-binding residues include cysteine 47, cysteine 52, cysteine 58, cysteine 73, cysteine 77, cysteine 80, and serine 287. Positions 59-276 constitute a Radical SAM core domain; it reads WTKKHATVMI…AQIARAKGFL (218 aa).

Belongs to the radical SAM superfamily. Lipoyl synthase family. [4Fe-4S] cluster serves as cofactor.

It is found in the cytoplasm. The catalysed reaction is [[Fe-S] cluster scaffold protein carrying a second [4Fe-4S](2+) cluster] + N(6)-octanoyl-L-lysyl-[protein] + 2 oxidized [2Fe-2S]-[ferredoxin] + 2 S-adenosyl-L-methionine + 4 H(+) = [[Fe-S] cluster scaffold protein] + N(6)-[(R)-dihydrolipoyl]-L-lysyl-[protein] + 4 Fe(3+) + 2 hydrogen sulfide + 2 5'-deoxyadenosine + 2 L-methionine + 2 reduced [2Fe-2S]-[ferredoxin]. Its pathway is protein modification; protein lipoylation via endogenous pathway; protein N(6)-(lipoyl)lysine from octanoyl-[acyl-carrier-protein]: step 2/2. In terms of biological role, catalyzes the radical-mediated insertion of two sulfur atoms into the C-6 and C-8 positions of the octanoyl moiety bound to the lipoyl domains of lipoate-dependent enzymes, thereby converting the octanoylated domains into lipoylated derivatives. The polypeptide is Lipoyl synthase (Sphingopyxis alaskensis (strain DSM 13593 / LMG 18877 / RB2256) (Sphingomonas alaskensis)).